A 185-amino-acid chain; its full sequence is 3-hydroxyanthranilate 3,4-dioxygenase (185 aa).

R44 is an O2 binding site. The Fe cation site is built by H48, E54, and H95. E54 lines the substrate pocket. R99 and E109 together coordinate substrate. A divalent metal cation contacts are provided by C124, C127, C161, and C164.

The protein belongs to the 3-HAO family. It depends on Fe(2+) as a cofactor.

The protein localises to the cytoplasm. The enzyme catalyses 3-hydroxyanthranilate + O2 = (2Z,4Z)-2-amino-3-carboxymuconate 6-semialdehyde. It participates in cofactor biosynthesis; NAD(+) biosynthesis; quinolinate from L-kynurenine: step 3/3. Its function is as follows. Catalyzes the oxidative ring opening of 3-hydroxyanthranilate to 2-amino-3-carboxymuconate semialdehyde, which spontaneously cyclizes to quinolinate. This chain is 3-hydroxyanthranilate 3,4-dioxygenase, found in Podospora anserina (strain S / ATCC MYA-4624 / DSM 980 / FGSC 10383) (Pleurage anserina).